We begin with the raw amino-acid sequence, 403 residues long: Argininosuccinate synthase (403 aa).

ATP is bound by residues 13–21 and Ala-40; that span reads AYSGGLDTS. Positions 91 and 96 each coordinate L-citrulline. Gly-121 provides a ligand contact to ATP. Residues Thr-123, Asn-127, and Asp-128 each coordinate L-aspartate. Residue Asn-127 participates in L-citrulline binding. L-citrulline contacts are provided by Arg-131, Ser-180, Ser-189, Glu-265, and Tyr-277.

The protein belongs to the argininosuccinate synthase family. Type 1 subfamily. In terms of assembly, homotetramer.

It localises to the cytoplasm. It catalyses the reaction L-citrulline + L-aspartate + ATP = 2-(N(omega)-L-arginino)succinate + AMP + diphosphate + H(+). The protein operates within amino-acid biosynthesis; L-arginine biosynthesis; L-arginine from L-ornithine and carbamoyl phosphate: step 2/3. This Leptospira interrogans serogroup Icterohaemorrhagiae serovar Lai (strain 56601) protein is Argininosuccinate synthase.